A 122-amino-acid chain; its full sequence is Glycine cleavage system H protein (122 aa).

The Lipoyl-binding domain maps to 22 to 103 (IGIIGISDYA…AFGSWFFKVE (82 aa)). N6-lipoyllysine is present on lysine 63.

It belongs to the GcvH family. The glycine cleavage system is composed of four proteins: P, T, L and H. It depends on (R)-lipoate as a cofactor.

The glycine cleavage system catalyzes the degradation of glycine. The H protein shuttles the methylamine group of glycine from the P protein to the T protein. The sequence is that of Glycine cleavage system H protein from Treponema denticola (strain ATCC 35405 / DSM 14222 / CIP 103919 / JCM 8153 / KCTC 15104).